We begin with the raw amino-acid sequence, 878 residues long: Coatomer subunit gamma (878 aa).

HEAT repeat units lie at residues 64–101 (REATDCFFAMTKLFQSKDVVLRRMVYLGIKELSSVAED), 287–324 (RMLSPAFSILQLFCSSPKATLRFAAVRTLNKVAMTHPA), 326–359 (VTTCNLDLEGLITDSNRSVATLAITTLLKTGAES), 360–396 (SVERLMKQISTFVAEISDEFKIVVVQAICALCTKYPR), 399–434 (TVLMNFLSGMLREEGGLEYKTSIVDTIITIIEENAD), and 471–508 (ATPSKYIRFIYNRVILESPIVRAAAVTALSQFGASCPA).

This sequence belongs to the COPG family. Oligomeric complex that consists of at least the alpha, beta, beta', gamma, delta, epsilon and zeta subunits.

It is found in the cytoplasm. The protein resides in the golgi apparatus membrane. Its subcellular location is the cytoplasmic vesicle. The protein localises to the COPI-coated vesicle membrane. It localises to the endoplasmic reticulum. In terms of biological role, the coatomer is a cytosolic protein complex that binds to dilysine motifs and reversibly associates with Golgi non-clathrin-coated vesicles, which further mediate biosynthetic protein transport from the ER, via the Golgi up to the trans Golgi network. Coatomer complex is required for budding from Golgi membranes, and is essential for the retrograde Golgi-to-ER transport of dilysine-tagged proteins. Required for limiting lipid storage in lipid droplets. Involved in the expansion of luminal extracellular matrices and apical membrane during tubulogenesis. Required in the tracheal epithelium for luminal protein secretion and diametric tube growth. In salivary glands, required for deposition of O-glycans and luminal extracellular matrix assembly. Required for epidermal morphogenesis and cuticle development. The polypeptide is Coatomer subunit gamma (Drosophila pseudoobscura pseudoobscura (Fruit fly)).